A 665-amino-acid polypeptide reads, in one-letter code: UvrABC system protein B (665 aa).

The Helicase ATP-binding domain maps to 25-412 (ASIEGGNRYQ…ENRIVEQVIR (388 aa)). Residue 38 to 45 (GATGTGKT) coordinates ATP. The Beta-hairpin motif lies at 91–114 (YYDYYQPEAYIPVTDTYIEKTAAI). One can recognise a Helicase C-terminal domain in the interval 429 to 583 (QIDDLLGEIK…VAYNKLHGIT (155 aa)). Positions 626-661 (PNLIDKLEAQMKEASKKLEFEEAAKLRDRIKQLRDK) constitute a UVR domain.

The protein belongs to the UvrB family. Forms a heterotetramer with UvrA during the search for lesions. Interacts with UvrC in an incision complex.

It localises to the cytoplasm. In terms of biological role, the UvrABC repair system catalyzes the recognition and processing of DNA lesions. A damage recognition complex composed of 2 UvrA and 2 UvrB subunits scans DNA for abnormalities. Upon binding of the UvrA(2)B(2) complex to a putative damaged site, the DNA wraps around one UvrB monomer. DNA wrap is dependent on ATP binding by UvrB and probably causes local melting of the DNA helix, facilitating insertion of UvrB beta-hairpin between the DNA strands. Then UvrB probes one DNA strand for the presence of a lesion. If a lesion is found the UvrA subunits dissociate and the UvrB-DNA preincision complex is formed. This complex is subsequently bound by UvrC and the second UvrB is released. If no lesion is found, the DNA wraps around the other UvrB subunit that will check the other stand for damage. The polypeptide is UvrABC system protein B (Nostoc sp. (strain PCC 7120 / SAG 25.82 / UTEX 2576)).